The sequence spans 570 residues: Zona pellucida sperm-binding protein 4 (570 aa).

The N-terminal stretch at 1–19 (MWLLQPLLLCVPLSLAVHG) is a signal peptide. Topologically, residues 20–545 (QQKPQVPDYP…SSSPIDSQAL (526 aa)) are extracellular. Residue N68 is glycosylated (N-linked (GlcNAc...) asparagine). The region spanning 177–218 (DLCDSVPKWDRLPCASSPITQGDCNKLGCCYKSEANSCYYGN) is the P-type domain. Positions 223–496 (RCTQDGHFSI…SSCRITCPVA (274 aa)) constitute a ZP domain. A glycan (N-linked (GlcNAc...) asparagine) is linked at N237. T337 carries an O-linked (GalNAc...) threonine glycan. Cysteines 402 and 476 form a disulfide. N-linked (GlcNAc...) asparagine glycans are attached at residues N477 and N535. The propeptide at 497–570 (RRRRHSDLHH…VSYLAIRKRR (74 aa)) is removed in mature form. A helical transmembrane segment spans residues 546–566 (WMAGLSGTLIFGFLLVSYLAI). At 567-570 (RKRR) the chain is on the cytoplasmic side.

It belongs to the ZP domain family. ZPB subfamily. Post-translationally, proteolytically cleaved before the transmembrane segment to yield the secreted ectodomain incorporated in the zona pellucida. As to expression, expressed in oocytes.

The protein localises to the zona pellucida. Its subcellular location is the cell membrane. In terms of biological role, component of the zona pellucida, an extracellular matrix surrounding oocytes which mediates sperm binding, induction of the acrosome reaction and prevents post-fertilization polyspermy. The zona pellucida is composed of 3 to 4 glycoproteins, ZP1, ZP2, ZP3, and ZP4. ZP4 may act as a sperm receptor. This chain is Zona pellucida sperm-binding protein 4 (ZP4), found in Felis catus (Cat).